A 248-amino-acid polypeptide reads, in one-letter code: HTH-type transcriptional regulator GgaR (248 aa).

The HTH gntR-type domain maps to 22–90 (TPLYIKFAET…RGYGTQINNI (69 aa)). Residues 50 to 69 (ERDLSQLTGVSRITVRKAMQ) constitute a DNA-binding region (H-T-H motif).

With respect to regulation, senses ADP-glucose (ADPG), which is the substrate for glycogen elongation, as an effector. In the presence of ADPG, GgaR becomes inactive and derepresses the yegTUV operon, leading to glycogen accumulation. In contrast, in the absence of glucose, the concentration of ADPG decreases, GgaR becomes active, and glycogen accumulation is repressed. Functionally, transcriptional regulator that regulates glycogen accumulation in response to the amount of glucose available to the cell. Acts as a repressor of the yegTUV operon, which may be involved in glycogen accumulation. The sequence is that of HTH-type transcriptional regulator GgaR from Escherichia coli O6:H1 (strain CFT073 / ATCC 700928 / UPEC).